A 298-amino-acid chain; its full sequence is Plasmodesmata-located protein 7 (298 aa).

An N-terminal signal peptide occupies residues 1–30 (MPMAKLRNIIKTLSIFFFLIAATAPSLSSA). Residues 31 to 258 (TSATDTFVFG…YKTNYGGEKT (228 aa)) are Extracellular-facing. 2 consecutive Gnk2-homologous domains span residues 35-139 (DTFV…NISF) and 140-240 (LGQE…TDGA). Intrachain disulfides connect cysteine 42/cysteine 117, cysteine 93/cysteine 102, cysteine 105/cysteine 130, cysteine 152/cysteine 218, cysteine 194/cysteine 203, and cysteine 206/cysteine 231. A helical membrane pass occupies residues 259–279 (FAIIIGLLAAVVLLIIFLLFL). Residues 259 to 279 (FAIIIGLLAAVVLLIIFLLFL) are necessary and sufficient for plasmodesmal targeting. Residues 280 to 298 (RGVCSRGGDFSILHSFTLI) are Cytoplasmic-facing.

Belongs to the cysteine-rich repeat secretory protein family. Plasmodesmata-located proteins (PDLD) subfamily. As to quaternary structure, (Microbial infection) Interacts with Grapevine fanleaf virus (GFLV) 2B-MP. In terms of tissue distribution, highly expressed in lateral root and elongation zone.

The protein resides in the cell membrane. Its subcellular location is the cell junction. It is found in the plasmodesma. Functionally, modulates cell-to-cell trafficking. The chain is Plasmodesmata-located protein 7 from Arabidopsis thaliana (Mouse-ear cress).